The sequence spans 282 residues: Bifunctional protein FolD (282 aa).

NADP(+)-binding positions include 166–168 (GAS) and isoleucine 232.

This sequence belongs to the tetrahydrofolate dehydrogenase/cyclohydrolase family. Homodimer.

The enzyme catalyses (6R)-5,10-methylene-5,6,7,8-tetrahydrofolate + NADP(+) = (6R)-5,10-methenyltetrahydrofolate + NADPH. It catalyses the reaction (6R)-5,10-methenyltetrahydrofolate + H2O = (6R)-10-formyltetrahydrofolate + H(+). Its pathway is one-carbon metabolism; tetrahydrofolate interconversion. In terms of biological role, catalyzes the oxidation of 5,10-methylenetetrahydrofolate to 5,10-methenyltetrahydrofolate and then the hydrolysis of 5,10-methenyltetrahydrofolate to 10-formyltetrahydrofolate. This chain is Bifunctional protein FolD, found in Histophilus somni (strain 129Pt) (Haemophilus somnus).